The sequence spans 938 residues: MLWPRLAAAEWAALAWELLGASVLLIAVRWLVRRLGPRPGGLGRSGTPVPPPSAAAAPASGEMTMDALLARLKLLNPDDLREEIVKAGLKCGPITSTTRFIFEKKLAQALLEQGGRLSSFYHHEAGVTALSQDPQRILKPAEGNPTDQAGFSEDRDFGYSVGLNPPEEEAVTSKTCSVPPSDTDTYRAGATASKEPPLYYGVCPVYEDVPARNERIYVYENKKEALQAVKMIKGSRFKAFSTREDAEKFARGICDYFPSPSKTSLPLSPVKTAPLFSNDRLKDGLCLSESETVNKERANSYKNPRTQDLTAKLRKAVEKGEEDTFSDLIWSNPRYLIGSGDNPTIVQEGCRYNVMHVAAKENQASICQLTLDVLENPDFMRLMYPDDDEAMLQKRIRYVVDLYLNTPDKMGYDTPLHFACKFGNADVVNVLSSHHLIVKNSRNKYDKTPEDVICERSKNKSVELKERIREYLKGHYYVPLLRAEETSSPVIGELWSPDQTAEASHVSRYGGSPRDPVLTLRAFAGPLSPAKAEDFRKLWKTPPREKAGFLHHVKKSDPERGFERVGRELAHELGYPWVEYWEFLGCFVDLSSQEGLQRLEEYLTQQEIGKKAQQETGEREASCRDKATTSGSNSISVRAFLDEDDMSLEEIKNRQNAARNNSPPTVGAFGHTRCSAFPLEQEADLIEAAEPGGPHSSRNGLCHPLNHSRTLAGKRPKAPRGEEAHLPPVSDLTVEFDKLNLQNIGRSVSKTPDESTKTKDQILTSRINAVERDLLEPSPADQLGNGHRRTESEMSARIAKMSLSPSSPRHEDQLEVTREPARRLFLFGEEPSKLDQDVLAALECADVDPHQFPAVHRWKSAVLCYSPSDRQSWPSPAVKGRFKSQLPDLSGPHSYSPGRNSVAGSNPAKPGLGSPGRYSPVHGSQLRRMARLAELAAL.

Topologically, residues 1–12 are lumenal; that stretch reads MLWPRLAAAEWA. Residues 13-32 form a helical; Signal-anchor for type III membrane protein membrane-spanning segment; that stretch reads ALAWELLGASVLLIAVRWLV. At 33–938 the chain is on the cytoplasmic side; that stretch reads RRLGPRPGGL…MARLAELAAL (906 aa). The 45-residue stretch at 69-113 folds into the LEM domain; the sequence is LARLKLLNPDDLREEIVKAGLKCGPITSTTRFIFEKKLAQALLEQ. Phosphoserine occurs at positions 259 and 268. The stretch at 411–440 is one ANK repeat; it reads GYDTPLHFACKFGNADVVNVLSSHHLIVKN. 4 positions are modified to phosphoserine: Ser488, Ser496, Ser512, and Ser528. Residues 609-627 show a composition bias toward basic and acidic residues; sequence GKKAQQETGEREASCRDKA. The interval 609–636 is disordered; it reads GKKAQQETGEREASCRDKATTSGSNSIS. A phosphoserine mark is found at Ser662, Ser804, Ser896, and Ser914. The segment at 870 to 924 is disordered; that stretch reads RQSWPSPAVKGRFKSQLPDLSGPHSYSPGRNSVAGSNPAKPGLGSPGRYSPVHGS.

It belongs to the ANKLE2 family. In terms of assembly, interacts with BAF/BANF1. Interacts with protein phosphatase 2A (PP2A) components PPP2C (PPP2CA or PPP2CB) and PPP2R1A. As to quaternary structure, (Microbial infection) May interact with non-structural protein 4A/NS4A from Zika virus strains Mr-766 or French Polynesia 10087PF/2013; the interaction may inhibit ANKLE2 function and contribute to defects in brain development, such as microcephaly.

It is found in the endoplasmic reticulum membrane. Functionally, involved in mitotic nuclear envelope reassembly by promoting dephosphorylation of BAF/BANF1 during mitotic exit. Coordinates the control of BAF/BANF1 dephosphorylation by inhibiting VRK1 kinase and promoting dephosphorylation of BAF/BANF1 by protein phosphatase 2A (PP2A), thereby facilitating nuclear envelope assembly. May regulate nuclear localization of VRK1 in non-dividing cells. It is unclear whether it acts as a real PP2A regulatory subunit or whether it is involved in recruitment of the PP2A complex. Involved in brain development. This is Ankyrin repeat and LEM domain-containing protein 2 (ANKLE2) from Homo sapiens (Human).